The chain runs to 852 residues: Glutamine--tRNA ligase (852 aa).

The tract at residues 1-42 (MGAFGWEQDRGAPFSGRSPRILTRMTDAPRPTAGADAPARPP) is disordered. The segment at 1-635 (MGAFGWEQDR…ITLKDTWGKQ (635 aa)) is glutaminyl-tRNA synthetase. Over residues 28-38 (APRPTAGADAP) the composition is skewed to low complexity. The 'HIGH' region signature appears at 74–84 (PDPSGYAHLGH). Positions 107 and 252 each coordinate L-glutamine. Positions 308-312 (ITSKR) match the 'KMSKS' region motif. Disordered stretches follow at residues 533-562 (EGEN…TAPV) and 632-681 (WGKQ…LTPE). The segment at 636-852 (GGGTQQKAEG…LAAALKDALA (217 aa)) is gatB-like. The segment covering 664-675 (SSSPAKAHAPKA) has biased composition (low complexity).

This sequence in the N-terminal section; belongs to the class-I aminoacyl-tRNA synthetase family. In the C-terminal section; belongs to the GatB/GatE family. As to quaternary structure, monomer.

Its subcellular location is the cytoplasm. It catalyses the reaction tRNA(Gln) + L-glutamine + ATP = L-glutaminyl-tRNA(Gln) + AMP + diphosphate. In Deinococcus radiodurans (strain ATCC 13939 / DSM 20539 / JCM 16871 / CCUG 27074 / LMG 4051 / NBRC 15346 / NCIMB 9279 / VKM B-1422 / R1), this protein is Glutamine--tRNA ligase.